Here is a 633-residue protein sequence, read N- to C-terminus: Extracellular metalloproteinase 5 (633 aa).

Positions 1–21 (MHGLLLAAAGLLSLPLHVVAH) are cleaved as a signal peptide. The propeptide occupies 22–245 (PQPSTSLAGR…HNVVDYVSHA (224 aa)). Asn285 carries N-linked (GlcNAc...) asparagine glycosylation. His428 is a Zn(2+) binding site. Glu429 is a catalytic residue. Residue His432 participates in Zn(2+) binding. N-linked (GlcNAc...) asparagine glycans are attached at residues Asn592 and Asn621.

The protein belongs to the peptidase M36 family. Zn(2+) serves as cofactor.

It is found in the secreted. Secreted metalloproteinase probably acting as a virulence factor. The polypeptide is Extracellular metalloproteinase 5 (MEP5) (Trichophyton rubrum (Athlete's foot fungus)).